Consider the following 239-residue polypeptide: 1-(5-phosphoribosyl)-5-[(5-phosphoribosylamino)methylideneamino] imidazole-4-carboxamide isomerase (239 aa).

Asp9 (proton acceptor) is an active-site residue. Asp131 functions as the Proton donor in the catalytic mechanism.

The protein belongs to the HisA/HisF family.

Its subcellular location is the cytoplasm. The catalysed reaction is 1-(5-phospho-beta-D-ribosyl)-5-[(5-phospho-beta-D-ribosylamino)methylideneamino]imidazole-4-carboxamide = 5-[(5-phospho-1-deoxy-D-ribulos-1-ylimino)methylamino]-1-(5-phospho-beta-D-ribosyl)imidazole-4-carboxamide. It participates in amino-acid biosynthesis; L-histidine biosynthesis; L-histidine from 5-phospho-alpha-D-ribose 1-diphosphate: step 4/9. This Bacteroides thetaiotaomicron (strain ATCC 29148 / DSM 2079 / JCM 5827 / CCUG 10774 / NCTC 10582 / VPI-5482 / E50) protein is 1-(5-phosphoribosyl)-5-[(5-phosphoribosylamino)methylideneamino] imidazole-4-carboxamide isomerase.